The chain runs to 296 residues: Nucleotide-binding protein SGO_0954 (296 aa).

13-20 serves as a coordination point for ATP; it reads GMSGAGKT. 63-66 provides a ligand contact to GTP; it reads DMRS.

The protein belongs to the RapZ-like family.

Functionally, displays ATPase and GTPase activities. The protein is Nucleotide-binding protein SGO_0954 of Streptococcus gordonii (strain Challis / ATCC 35105 / BCRC 15272 / CH1 / DL1 / V288).